Here is a 272-residue protein sequence, read N- to C-terminus: Hydroxyethylthiazole kinase (272 aa).

Residue Met44 participates in substrate binding. ATP contacts are provided by Lys119 and Thr172. Substrate is bound at residue Gly199.

The protein belongs to the Thz kinase family. It depends on Mg(2+) as a cofactor.

The catalysed reaction is 5-(2-hydroxyethyl)-4-methylthiazole + ATP = 4-methyl-5-(2-phosphooxyethyl)-thiazole + ADP + H(+). It functions in the pathway cofactor biosynthesis; thiamine diphosphate biosynthesis; 4-methyl-5-(2-phosphoethyl)-thiazole from 5-(2-hydroxyethyl)-4-methylthiazole: step 1/1. In terms of biological role, catalyzes the phosphorylation of the hydroxyl group of 4-methyl-5-beta-hydroxyethylthiazole (THZ). The sequence is that of Hydroxyethylthiazole kinase from Enterococcus faecalis (strain ATCC 700802 / V583).